The following is a 384-amino-acid chain: Glucans biosynthesis protein C (384 aa).

The next 10 membrane-spanning stretches (helical) occupy residues 17–37 (AWLM…THSW), 54–74 (FIHA…SYML), 91–111 (VGIP…ILLQ), 140–160 (LWFL…FTWF), 173–193 (AISL…YAAI), 212–232 (FIVM…LAFI), 240–260 (FTTP…AYLL), 274–294 (TESV…FSLG), 311–331 (ASLF…AYIT), and 338–358 (LIGF…LYEI).

This sequence belongs to the acyltransferase 3 family. OpgC subfamily.

It is found in the cell membrane. The protein operates within glycan metabolism; osmoregulated periplasmic glucan (OPG) biosynthesis. In terms of biological role, necessary for the succinyl substitution of periplasmic glucans. Could catalyze the transfer of succinyl residues from the cytoplasmic side of the membrane to the nascent glucan backbones on the periplasmic side of the membrane. The polypeptide is Glucans biosynthesis protein C (Salmonella typhimurium (strain LT2 / SGSC1412 / ATCC 700720)).